Reading from the N-terminus, the 306-residue chain is Glutathione transport system permease protein GsiC (306 aa).

Over 1–8 (MLNYVLKR) the chain is Cytoplasmic. Residues 9–29 (LLGLIPTLLIVAVLVFLFVHL) form a helical membrane-spanning segment. Residues 30-102 (LPGDPARLIA…SRFLPTLWLT (73 aa)) are Periplasmic-facing. Positions 95-292 (FLPTLWLTIT…LEFILINLVV (198 aa)) constitute an ABC transmembrane type-1 domain. The helical transmembrane segment at 103 to 123 (ITSMIWAVLFGMAIGIAAAVW) threads the bilayer. Over 124–134 (RNRWPDRVGMT) the chain is Cytoplasmic. Residues 135–155 (LAVTGISFPAFALGMLLMQIF) traverse the membrane as a helical segment. Residues 156 to 168 (SVDLGWLPTVGAD) are Periplasmic-facing. A helical membrane pass occupies residues 169 to 189 (SWQHYILPSLTLGAAVASVMA). Residues 190 to 228 (RFTRSSFVDVLSEDYMRTARAKGVSETWVVLKHGLRNAM) lie on the Cytoplasmic side of the membrane. Residues 229–249 (IPVVTMMGLQFGFLLGGSIVV) form a helical membrane-spanning segment. Over 250 to 278 (EKVFNWPGLGRLLVDSVDMRDYPVIQAEV) the chain is Periplasmic. The chain crosses the membrane as a helical span at residues 279–299 (LLFSLEFILINLVVDVLYAAI). The Cytoplasmic segment spans residues 300 to 306 (NPAIRYK).

The protein belongs to the binding-protein-dependent transport system permease family. In terms of assembly, the complex is composed of two ATP-binding proteins (GsiA), two transmembrane proteins (GsiC and GsiD) and a solute-binding protein (GsiB).

It localises to the cell inner membrane. Its function is as follows. Part of the ABC transporter complex GsiABCD involved in glutathione import. Probably responsible for the translocation of the substrate across the membrane. The protein is Glutathione transport system permease protein GsiC of Salmonella choleraesuis (strain SC-B67).